The chain runs to 356 residues: Zinc finger protein 830 (356 aa).

Residues 11–33 (AQEELRKLMKAKQRESSSKKRIE) adopt a coiled-coil conformation. Residues 47-69 (CVVCNSLIKSELLWPAHILGKQH) form a C2H2-type zinc finger. A disordered region spans residues 71–195 (EKVAELKGTK…PTSSADNLPA (125 aa)). The span at 80 to 90 (KATTSSPSNTI) shows a compositional bias: polar residues. Composition is skewed to basic and acidic residues over residues 99 to 118 (KGSE…EDHP) and 125 to 135 (LPEEFFEKEKT). Residues 150–165 (DYEDVDDDDAEEGEEY) show a composition bias toward acidic residues. The stretch at 278–322 (AEEDEEGRLDRQIDEIDEQIQCYRRVEHLRDRKDTLQDAKMEVLK) forms a coiled coil.

It localises to the nucleus. It is found in the chromosome. The protein localises to the nucleus speckle. May act as an important regulator of the cell cycle that participates in the maintenance of genome integrity. This Xenopus laevis (African clawed frog) protein is Zinc finger protein 830.